A 297-amino-acid chain; its full sequence is Ubiquinol oxidase 2, mitochondrial (297 aa).

Residues 17–43 (VALNDKQHDKKVENGGAAASGGGDGGD) are disordered. A helical membrane pass occupies residues 122 to 142 (AMMLETVAAVPGMVGGMLLHC). Glu126, Glu165, and His168 together coordinate Fe cation. A helical transmembrane segment spans residues 184-204 (ALVFAVQGVFINAYFVTYLLS). Residues Glu216, Glu267, and His270 each coordinate Fe cation.

It belongs to the alternative oxidase family. Homodimer; disulfide-linked. It depends on Fe cation as a cofactor.

The protein resides in the mitochondrion inner membrane. It carries out the reaction 2 a ubiquinol + O2 = 2 a ubiquinone + 2 H2O. Its function is as follows. Catalyzes the cyanide-resistant oxidation of ubiquinol and the reduction of molecular oxygen to water, but does not translocate protons and consequently is not linked to oxidative phosphorylation. May increase respiration when the cytochrome respiratory pathway is restricted, or in response to low temperatures. This chain is Ubiquinol oxidase 2, mitochondrial (AOX2), found in Nicotiana tabacum (Common tobacco).